A 46-amino-acid chain; its full sequence is Protein YpdJ (46 aa).

In terms of biological role, may be involved in H(2) production during fermentative growth. The sequence is that of Protein YpdJ (ypdJ) from Escherichia coli (strain K12).